A 111-amino-acid polypeptide reads, in one-letter code: Large ribosomal subunit protein eL33x (111 aa).

It belongs to the eukaryotic ribosomal protein eL33 family.

This is Large ribosomal subunit protein eL33x (RPL35AD) from Arabidopsis thaliana (Mouse-ear cress).